The primary structure comprises 150 residues: Ribosome maturation factor RimP (150 aa).

Belongs to the RimP family.

It localises to the cytoplasm. Its function is as follows. Required for maturation of 30S ribosomal subunits. This chain is Ribosome maturation factor RimP, found in Thermotoga maritima (strain ATCC 43589 / DSM 3109 / JCM 10099 / NBRC 100826 / MSB8).